A 2028-amino-acid chain; its full sequence is Protein Daple (2028 aa).

Residues 11–131 form the Calponin-homology (CH) domain; it reads LFLQSPLVTW…KVLLLVLGCA (121 aa). A disordered region spans residues 222–250; that stretch reads AQHPPSPIKSSSADSTPSPTSSLSSEDKQ. Phosphoserine is present on residues S227 and S239. Low complexity predominate over residues 229-245; the sequence is IKSSSADSTPSPTSSLS. Coiled coils occupy residues 247–428, 456–1017, 1045–1094, and 1139–1393; these read EDKQ…SMNE, ELNE…QGEG, HKEA…SSQI, and LQNH…DQYK. The residue at position 486 (S486) is a Phosphoserine. Residues 1011–1024 are compositionally biased toward polar residues; that stretch reads RQNQGEGQHLQNSF. Residues 1011-1043 are disordered; the sequence is RQNQGEGQHLQNSFKHPAGKTAASHQGKEAWGP. The span at 1419–1428 shows a compositional bias: basic and acidic residues; it reads KEGSRERLKS. 2 disordered regions span residues 1419 to 1724 and 1736 to 1803; these read KEGS…GAKM and AAPT…SLSR. Low complexity-rich tracts occupy residues 1439 to 1450, 1517 to 1534, and 1568 to 1588; these read SSDPASPAASQP, SRTCSTSATTTAPSNSTP, and SRPSSLESSRNTSSNSSPLNL. S1444 is modified (phosphoserine). The segment covering 1589-1604 has biased composition (polar residues); that stretch reads KGSSEQLHGRSESFSS. S1601 is subject to Phosphoserine. Residues 1661 to 1691 carry the GBA motif; it reads CSASPSSEMVTLEEFLEESNRSSPTHDTPSC. Positions 1689–1704 are enriched in basic and acidic residues; sequence PSCRDDLLSDYFRKAS. Residues 1792 to 1803 show a composition bias toward low complexity; it reads HAPASRSASLSR. Position 1806 is a phosphoserine (S1806). The interval 1816–2021 is disordered; that stretch reads SGPEACKQES…PEPGGDPQTV (206 aa). A compositionally biased stretch (polar residues) spans 1842 to 1855; the sequence is SHTLQSPAPPSSHS. The segment covering 1879–1897 has biased composition (basic and acidic residues); the sequence is RPLDTRRFSLAPPKEERLA. Residues 1902–1924 show a composition bias toward low complexity; sequence SATAPAIATAGAGAAAAGSGSNS. At T1954 the chain carries Phosphothreonine. The PDZ-binding motif lies at 2025-2028; that stretch reads YGCV. Residues 2026–2028 are DVL1-binding; sequence GCV.

It belongs to the CCDC88 family. In terms of assembly, homooligomer. Interacts with DVL1 (via PDZ domain); dissociates following initiation of non-canonical Wnt signaling. Interacts (via C-terminus) with ligand-activated Wnt receptor FZD7; competes with DVL1 for binding to FZD7 and displaces DVL1 from ligand-activated FZD7. Interacts (via GBA motif) with guanine nucleotide-binding protein G(i) alpha subunits GNAI1, GNAI2 and GNAI3 (inactive GDP-bound form); interacts with higher affinity with GNAI1 and GNAI3 than with GNAI2 and interaction leads to G(i) alpha subunit activation. Does not interact with GNAO1.

It localises to the cytoplasm. The protein localises to the cell junction. Required for activation of guanine nucleotide-binding proteins (G-proteins) during non-canonical Wnt signaling. Binds to ligand-activated Wnt receptor FZD7, displacing DVL1 from the FZD7 receptor and leading to inhibition of canonical Wnt signaling. Acts as a non-receptor guanine nucleotide exchange factor by also binding to guanine nucleotide-binding protein G(i) alpha (Gi-alpha) subunits, leading to their activation. Binding to Gi-alpha subunits displaces the beta and gamma subunits from the heterotrimeric G-protein complex, triggering non-canonical Wnt responses such as activation of RAC1 and PI3K-AKT signaling. Promotes apical constriction of cells via ARHGEF18. The protein is Protein Daple (CCDC88C) of Homo sapiens (Human).